A 102-amino-acid polypeptide reads, in one-letter code: Monothiol glutaredoxin-S7 (102 aa).

Positions M1–W101 constitute a Glutaredoxin domain. Position 21 (C21) interacts with [2Fe-2S] cluster. Residues A99 to L102 carry the Responsive for interaction with TGA factors motif.

This sequence belongs to the glutaredoxin family. CC-type subfamily.

It is found in the cytoplasm. It localises to the nucleus. Its function is as follows. May only reduce GSH-thiol disulfides, but not protein disulfides. In Arabidopsis thaliana (Mouse-ear cress), this protein is Monothiol glutaredoxin-S7 (GRXS7).